Reading from the N-terminus, the 392-residue chain is L-rhamnonate dehydratase (392 aa).

Residues H22 and R48 each contribute to the substrate site. Residues D214, E240, and E268 each contribute to the Mg(2+) site. Residue H318 is the Proton acceptor of the active site. E338 serves as a coordination point for substrate.

Belongs to the mandelate racemase/muconate lactonizing enzyme family. RhamD subfamily. In terms of assembly, homooctamer; tetramer of dimers. Mg(2+) is required as a cofactor.

It carries out the reaction L-rhamnonate = 2-dehydro-3-deoxy-L-rhamnonate + H2O. Its function is as follows. Catalyzes the dehydration of L-rhamnonate to 2-keto-3-deoxy-L-rhamnonate (KDR). This Burkholderia ambifaria (strain MC40-6) protein is L-rhamnonate dehydratase.